Consider the following 457-residue polypeptide: MLLRAAWRRAAVAVTAAPGPKPAAPTRGLRLRVGDHAPQSAVPADTAAAPEAGPVLRPLYMDVQATTPLDPRVLDAMLPYLINYYGNPHSRTHAYGWESEAAMERARQQVASLIGADPREIIFTSGATESNNIAIKGVARFYRSRKKHLITTQTEHKCVLDSCRSLEAEGFQVTYLPVQKSGIIDLKELEAAIQPDTSLVSVMTVNNEIGVKQPIAEIGRICSSRKVYFHTDAAQAVGKIPLDVNDMKIDLMSISGHKIYGPKGVGAIYIRRRPRVRVEALQSGGGQERGMRSGTVPTPLVVGLGAACEVAQQEMEYDHKRISKLSERLIQNIMKSLPDVVMNGDPEHHYPGCINLSFAYVEGESLLMALKDVALSSGSACTSASLEPSYVLRAIGTDEDLAHSSIRFGVGRFTTEEEVDYTVEKCIQHVKRLREMSPLWEMVQDGIDLKSIKWTQH.

Positions 127, 128, 235, 255, and 257 each coordinate pyridoxal 5'-phosphate. Lys-258 is modified (N6-(pyridoxal phosphate)lysine). Thr-295 is a binding site for pyridoxal 5'-phosphate. Residue Cys-381 is the Cysteine persulfide intermediate of the active site. Residue Cys-381 coordinates [2Fe-2S] cluster. Cys-381 contributes to the Zn(2+) binding site. Cys-381 is modified (cysteine persulfide).

It belongs to the class-V pyridoxal-phosphate-dependent aminotransferase family. NifS/IscS subfamily. In terms of assembly, homodimer. Component of the mitochondrial core iron-sulfur cluster (ISC) complex composed of NFS1, LYRM4, NDUFAB1, ISCU, FXN, and FDX2; this complex is a heterohexamer containing two copies of each monomer. Component of cyteine desulfurase complex composed of NFS1, LYRM4 and NDUFAB1; this complex contributes to the activation of cysteine desulfurase activity and NFS1 stabilization. Interacts (homodimer form) with ISCU (D-state); each monomer interacts with the C-terminal regions of each NFS1 monomer. Interacts with HSPA9. Interacts (via homodimer form) with FDX2. Interacts (via homodimer form) with FXN. Interacts with LYRM4. Component of a complex composed of FXN, NFS1, LYRM4 and ISCU. Monomer. Homodimer. Oligomer. Interacts with ISCU. Component of the cysteine desulfurase complex composed of NFS1 and LYRM4; this complex contributes to the activation of cysteine desulfurase activity. Interacts with MOCS3. Pyridoxal 5'-phosphate is required as a cofactor. Post-translationally, N-gluconoylated. Cysteine persulfide intermediate is reduced by thiol-containing molecules like glutathione and L-cysteine. Persulfide reduction is a rate-limiting step of cysteine desulfurase catalytic cycle.

It localises to the mitochondrion. Its subcellular location is the cytoplasm. It is found in the nucleus. The protein localises to the cytoskeleton. The protein resides in the microtubule organizing center. It localises to the centrosome. The catalysed reaction is (sulfur carrier)-H + L-cysteine = (sulfur carrier)-SH + L-alanine. The enzyme catalyses L-cysteinyl-[cysteine desulfurase] + L-cysteine = S-sulfanyl-L-cysteinyl-[cysteine desulfurase] + L-alanine. With respect to regulation, active only in complex with LYRM4. Cysteine desulfurase, of the core iron-sulfur cluster (ISC) assembly complex, that catalyzes the desulfuration of L-cysteine to L-alanine, as component of the cysteine desulfurase complex leading to the formation of a cysteine persulfide intermediate at the active site cysteine residue and participates in the [2Fe-2S] clusters assembly on the scaffolding protein ISCU. The persulfide is then transferred on the flexible Cys loop from the catalytic site of NFS1 to the surface of NFS1. After the NFS1-linked persulfide sulfur is transferred to one of the conserved Cys residues of the scaffold, a reaction assisted by FXN. The core iron-sulfur cluster (ISC) assembly complex is involved in the de novo synthesis of a [2Fe-2S] cluster, the first step of the mitochondrial iron-sulfur protein biogenesis. This process is initiated by the cysteine desulfurase complex (NFS1:LYRM4:NDUFAB1) that produces persulfide which is delivered on the scaffold protein ISCU in a FXN-dependent manner. Then this complex is stabilized by FDX2 which provides reducing equivalents to accomplish the [2Fe-2S] cluster assembly. Finally, the [2Fe-2S] cluster is transferred from ISCU to chaperone proteins, including HSCB, HSPA9 and GLRX5. Its function is as follows. May catalyze the desulfuration of L-cysteine to L-alanine as component of the cysteine desulfurase complex (NFS1:LYRM4), leading to the formation of a cysteine persulfide intermediate. Acts as a sulfur donor for MOCS3 by transferring the sulfur of the cysteine persulfide intermediate on MOCS3. In Pongo abelii (Sumatran orangutan), this protein is Cysteine desulfurase.